A 1035-amino-acid polypeptide reads, in one-letter code: Translation initiation factor IF-2 (1035 aa).

Residues 56-66 (KDDKSNTDDNK) show a composition bias toward basic and acidic residues. Disordered regions lie at residues 56-80 (KDDKSNTDDNKTASAHSVAQHSSEA) and 114-402 (ANDA…VIKN). Residues 68–78 (ASAHSVAQHSS) show a composition bias toward polar residues. 2 stretches are compositionally biased toward basic and acidic residues: residues 114–137 (ANDAKSQKKPEEKRKKNDFVRVET) and 146–200 (LVRE…EIKD). Polar residues predominate over residues 219 to 228 (DSATNVNLNE). Residues 229 to 238 (SIDKDKKTND) show a composition bias toward basic and acidic residues. The span at 239-253 (NRQVSTDNSAVNNEE) shows a compositional bias: polar residues. Residues 259 to 315 (LNKKDMDKKNNNKKNEAKKNAEKKNEAKKNEKNDNKGGNAKKNEHRSPDMKKNDSNR) are compositionally biased toward basic and acidic residues. Positions 316–325 (PQDANKQNSK) are enriched in polar residues. Basic and acidic residues-rich tracts occupy residues 327 to 347 (AADKNREEGRTGSKKSLEIPK) and 354 to 385 (QKEEFNSQRAERREYNKDAEKDSKRELRKEQP). Residues 537–706 (PRPPVVVVMG…LLAADMLELK (170 aa)) enclose the tr-type G domain. The G1 stretch occupies residues 546–553 (GHVDHGKT). A GTP-binding site is contributed by 546–553 (GHVDHGKT). The segment at 571-575 (GITQH) is G2. A G3 region spans residues 592 to 595 (DTPG). Residues 592-596 (DTPGH) and 646-649 (NKID) contribute to the GTP site. The interval 646 to 649 (NKID) is G4. The segment at 682–684 (SAK) is G5.

It belongs to the TRAFAC class translation factor GTPase superfamily. Classic translation factor GTPase family. IF-2 subfamily.

Its subcellular location is the cytoplasm. In terms of biological role, one of the essential components for the initiation of protein synthesis. Protects formylmethionyl-tRNA from spontaneous hydrolysis and promotes its binding to the 30S ribosomal subunits. Also involved in the hydrolysis of GTP during the formation of the 70S ribosomal complex. The sequence is that of Translation initiation factor IF-2 from Acetivibrio thermocellus (strain ATCC 27405 / DSM 1237 / JCM 9322 / NBRC 103400 / NCIMB 10682 / NRRL B-4536 / VPI 7372) (Clostridium thermocellum).